The sequence spans 205 residues: Cytochrome c biogenesis ATP-binding export protein CcmA (205 aa).

Residues 2-204 (LEVSNLTAIR…SPKLRKIKLG (203 aa)) enclose the ABC transporter domain. 34–41 (GRNGTGKT) contacts ATP.

This sequence belongs to the ABC transporter superfamily. CcmA exporter (TC 3.A.1.107) family. In terms of assembly, the complex is composed of two ATP-binding proteins (CcmA) and two transmembrane proteins (CcmB).

The protein resides in the cell inner membrane. It carries out the reaction heme b(in) + ATP + H2O = heme b(out) + ADP + phosphate + H(+). Part of the ABC transporter complex CcmAB involved in the biogenesis of c-type cytochromes; once thought to export heme, this seems not to be the case, but its exact role is uncertain. Responsible for energy coupling to the transport system. This chain is Cytochrome c biogenesis ATP-binding export protein CcmA, found in Vibrio vulnificus (strain YJ016).